Consider the following 384-residue polypeptide: Transcription factor TGA3 (384 aa).

Disordered regions lie at residues 36–70 (KSDI…NNRV) and 76–95 (YNNS…EDRI). The segment covering 39 to 55 (INNITSNQNNNQSSSTT) has biased composition (low complexity). Residues 58 to 68 (VDARPEADDNN) show a composition bias toward basic and acidic residues. Over residues 76–88 (YNNSLEAEPSSNN) the composition is skewed to polar residues. The bZIP domain occupies 96 to 138 (NDKMKRRLAQNREAARKSRLRKKAHVQQLEESRLKLSQLEQEL). Positions 98 to 118 (KMKRRLAQNREAARKSRLRKK) are basic motif. Residues 99–106 (MKRRLAQN) carry the Nuclear localization signal motif. Residues 117–144 (KKAHVQQLEESRLKLSQLEQELVRARQQ) are a coiled coil. The leucine-zipper stretch occupies residues 124–138 (LEESRLKLSQLEQEL). The 213-residue stretch at 167–379 (IAAFEMEYTH…RALSSLWAAR (213 aa)) folds into the DOG1 domain. The hexadecanoate site is built by lysine 219, arginine 236, and phenylalanine 249. Residues 267-296 (DQQLLEVRNLQQSSQQAEEALSQGLDKLQQ) are a coiled coil.

The protein belongs to the bZIP family. As to quaternary structure, binds DNA as a dimer. Interacts with NPR3, NPR4 and sumoylated NPR1. Interacts with GRXC7/ROXY1. Expressed in the whole plant.

The protein resides in the nucleus. Its function is as follows. Transcriptional activator that binds specifically to the DNA sequence 5'-TGACG-3'. Recognizes ocs elements like the as-1 motif of the cauliflower mosaic virus 35S promoter. Binding to the as-1-like cis elements mediate auxin- and salicylic acid-inducible transcription. Required to induce the systemic acquired resistance (SAR) via the regulation of pathogenesis-related genes expression. Binding to the as-1 element of PR-1 promoter is salicylic acid-inducible and mediated by sumoylated NPR1. Could also bind to the Hex-motif (5'-TGACGTGG-3') another cis-acting element found in plant histone promoters. The sequence is that of Transcription factor TGA3 from Arabidopsis thaliana (Mouse-ear cress).